The chain runs to 319 residues: uncharacterized protein (319 aa).

Residues 21-70 (ETETLKNSTDEVQTSSSFSSSGGRQSSPLTSGSKLEREKQTPSLEQGDTQ) form a disordered region. The span at 25–34 (LKNSTDEVQT) shows a compositional bias: polar residues. Over residues 35 to 51 (SSSFSSSGGRQSSPLTS) the composition is skewed to low complexity. Polar residues predominate over residues 61–70 (TPSLEQGDTQ).

This is an uncharacterized protein from Homo sapiens (Human).